Reading from the N-terminus, the 263-residue chain is UPF0758 protein Pden_2304 (263 aa).

The 123-residue stretch at 141–263 (VLTSWDALLD…ELSFRSEGLL (123 aa)) folds into the MPN domain. Zn(2+) contacts are provided by His-212, His-214, and Asp-225. A JAMM motif motif is present at residues 212–225 (HNHPSGDPTPSQAD).

This sequence belongs to the UPF0758 family.

The sequence is that of UPF0758 protein Pden_2304 from Paracoccus denitrificans (strain Pd 1222).